We begin with the raw amino-acid sequence, 565 residues long: Deformed epidermal autoregulatory factor 1 homolog (565 aa).

2 disordered regions span residues 34–62 (GGEA…ETPR) and 162–190 (GLKG…KGGT). A compositionally biased stretch (pro residues) spans 169-181 (PLTPGPQSPPTPL). Threonine 171 carries the post-translational modification Phosphothreonine. Residue serine 176 is modified to Phosphoserine. Threonine 179 is subject to Phosphothreonine. Residues 193–273 (NWDPSVYDSE…QCLIQDGILN (81 aa)) enclose the SAND domain. The Nuclear localization signal signature appears at 301-316 (KRRKKENELPTTPVKK). The interaction with LMO4 stretch occupies residues 403 to 478 (IAPFPEAALP…QLKTLFEQAK (76 aa)). Threonine 432 is modified (phosphothreonine). Serine 448 is subject to Phosphoserine. Residues cysteine 504, cysteine 507, cysteine 515, cysteine 518, cysteine 524, cysteine 528, histidine 536, and cysteine 540 each contribute to the Zn(2+) site. The MYND-type zinc-finger motif lies at 504–540 (CVNCGREAMSECTGCHKVNYCSTFCQRKDWKDHQHIC).

As to quaternary structure, homodimer. Isoform 1 and isoform 4 may form a heterodimer. Interacts with LMO2 and CLIM2. Interacts with LMO4; LMO4 blocks export from nucleus. May interact with the corepressors NCOR1 and NCRO2. Identified in a complex with the XRCC5 and XRCC6 heterodimer. Interacts (via the SAND domain) with the DNA-PK complex subunit XRCC6; the interaction is direct and may be inhibited by DNA-binding. In terms of processing, may be phosphorylated by DNA-PK complex in a DNA independent manner (in vitro). Expressed in various tissues and cells such as in peripheral mononuclear cells and hormone-secreting pituitary cells. Expression in pancreatic lymph nodes of patients with type 1 diabetes is 20 times higher than in healthy controls. Highly expressed in fetal and adult brain.

The protein localises to the nucleus. It is found in the cytoplasm. The protein resides in the secreted. In terms of biological role, transcription factor that binds to sequence with multiple copies of 5'-TTC[CG]G-3' present in its own promoter and that of the HNRPA2B1 gene. Down-regulates transcription of these genes. Binds to the retinoic acid response element (RARE) 5'-AGGGTTCACCGAAAGTTCA-3'. Activates the proenkephalin gene independently of promoter binding, probably through protein-protein interaction. When secreted, behaves as an inhibitor of cell proliferation, by arresting cells in the G0 or G1 phase. Required for neural tube closure and skeletal patterning. Regulates epithelial cell proliferation and side-branching in the mammary gland. Controls the expression of peripheral tissue antigens in pancreatic lymph nodes. Isoform 1 displays greater transcriptional activity than isoform 4. Isoform 4 may inhibit transcriptional activity of isoform 1 by interacting with isoform 1 and retaining it in the cytoplasm. Transcriptional activator of EIF4G3. The sequence is that of Deformed epidermal autoregulatory factor 1 homolog (DEAF1) from Homo sapiens (Human).